Consider the following 134-residue polypeptide: Arsenate reductase (134 aa).

Residues Cys11, Cys83, and Cys90 each act as nucleophile in the active site. 2 disulfide bridges follow: Cys11–Cys83 and Cys83–Cys90.

The protein belongs to the low molecular weight phosphotyrosine protein phosphatase family. Thioredoxin-coupled ArsC subfamily.

It localises to the cytoplasm. It catalyses the reaction arsenate + [thioredoxin]-dithiol + H(+) = arsenite + [thioredoxin]-disulfide + H2O. Functionally, catalyzes the reduction of arsenate [As(V)] to arsenite [As(III)]. The polypeptide is Arsenate reductase (Bacillus cereus (strain AH187)).